We begin with the raw amino-acid sequence, 212 residues long: Putative DNA-binding protein At1g48610 (212 aa).

The tract at residues 1–130 (MAKTALTPPA…GRPKKDDVAA (130 aa)) is disordered. Over residues 27 to 44 (NKPQTDATGVSATDTASQ) the composition is skewed to polar residues. DNA-binding regions (a.T hook) lie at residues 45–56 (KRGRGRPPKAKS), 70–79 (TKPSGRPKRN), and 94–98 (KKRGR). Polar residues predominate over residues 57–72 (DSSQIGAVSAKASTKP). Residues 103-113 (TVTAAVVTTAT) are compositionally biased toward low complexity. The a.T hook 4 DNA-binding region spans 118-127 (RKRGRPKKDD). Residues 176–210 (DLKKRTALLQKKVKEAAAKLKQAVTAIDEVQKLAD) are a coiled coil.

It localises to the nucleus. In terms of biological role, may bind DNA. The polypeptide is Putative DNA-binding protein At1g48610 (Arabidopsis thaliana (Mouse-ear cress)).